Reading from the N-terminus, the 638-residue chain is MLDFFTIFSKGGLVLWCFQGVSDSCTGPVNALIRSVLLQERGGNNSFTHEALTLKYKLDNQFELVFVVGFQKILTLTYVDKLIDDVHRLFRDKYRTEIQQQSALSLLNGTFDFQNDFLRLLREREESSKIRAPTTMKKFEDSEKAKKPVRSMIETRGEKPKEKAKNSKKKGAKKESSDGPLATGKAVPAEKSGLPAGPENGVELSKEELIRRKREEFIQKHGRGLEKSSKSTKSDAPKEKGKKAPRVWALGGCANKEVLDYSAPTTNGAPDAAPPEDINLIRGTGPGGQLQDLDCSSSDDEETAQNASKPSATKGTLGGMFGMLKGLVGSKSLSREDMESVLDKMRDHLIAKNVAADIAVQLCESVANKLEGKVMGTFSTVTSTVKQALQESLVQILQPQRRVDMLRDIMDAQRHQRPYVVTFCGVNGVGKSTNLAKISFWLLENGFSVLIAACDTFRAGAVEHVRTHTRRLSALHPPEKHAGPTMVQLFEKGYGKDAAGIAMEAIAFARNQGFDVVLVDTAGRMQDNAPLMTALAKLITVNTPDLVLFVGEALVGNEAVDQLVKFNRALADHSMAQTPRLIDGIVLTKFDTIDDKVGAAISMTYITSKPIVFVGTGQTYCDLRSLNAKAVVAALMKA.

Disordered regions lie at residues 129–205, 218–245, and 262–315; these read KIRA…VELS, IQKHGRGLEKSSKSTKSDAPKEKGKKAP, and SAPT…ATKG. Composition is skewed to basic and acidic residues over residues 137-146 and 153-165; these read KKFEDSEKAK and IETRGEKPKEKAK. Serine 177 is subject to Phosphoserine. The segment covering 218-239 has biased composition (basic and acidic residues); sequence IQKHGRGLEKSSKSTKSDAPKE. Threonine 284 is modified (phosphothreonine). Phosphoserine is present on residues serine 296, serine 297, and serine 298. Positions 304–314 are enriched in polar residues; that stretch reads AQNASKPSATK. An NG domain region spans residues 419–636; it reads YVVTFCGVNG…NAKAVVAALM (218 aa). 425 to 432 contacts GTP; the sequence is GVNGVGKS. Serine 473 carries the post-translational modification Phosphoserine. 520–524 provides a ligand contact to GTP; that stretch reads DTAGR. Residue threonine 578 is modified to Phosphothreonine. A GTP-binding site is contributed by 588–591; sequence TKFD.

It belongs to the GTP-binding SRP family. Heterodimer with SRPRB. Interacts with the signal recognition particle (SRP) complex subunit SRP54.

It localises to the endoplasmic reticulum membrane. Its function is as follows. Component of the SRP (signal recognition particle) receptor. Ensures, in conjunction with the signal recognition particle, the correct targeting of the nascent secretory proteins to the endoplasmic reticulum membrane system. Forms a guanosine 5'-triphosphate (GTP)-dependent complex with the SRP subunit SRP54. SRP receptor compaction and GTPase rearrangement drive SRP-mediated cotranslational protein translocation into the ER. The chain is Signal recognition particle receptor subunit alpha from Canis lupus familiaris (Dog).